Consider the following 171-residue polypeptide: Iron-sulfur cluster assembly protein 1 (171 aa).

Residues 1-55 (MLRAGGRRLLAPGLRRVLGGGAAAPVAVGGAKAYHERVVDHYENPRNVGSFENDD) constitute a mitochondrion transit peptide.

This sequence belongs to the NifU family. Component of the core Fe-S cluster (ISC) assembly machinery. The cofactor is [2Fe-2S] cluster.

Its subcellular location is the mitochondrion matrix. It participates in cofactor biosynthesis; iron-sulfur cluster biosynthesis. Scaffold protein for the de novo synthesis of iron-sulfur (Fe-S) clusters within mitochondria, which is required for maturation of both mitochondrial and cytoplasmic [2Fe-2S] and [4Fe-4S] proteins. First, a [2Fe-2S] cluster is transiently assembled on the scaffold protein ISCU (ISU1, ISU2 or ISU3). In a second step, the cluster is released from ISCU, transferred to a glutaredoxin, followed by the formation of mitochondrial [2Fe-2S] proteins, the synthesis of [4Fe-4S] clusters and their target-specific insertion into the recipient apoproteins. Cluster assembly on ISCU depends on the function of the cysteine desulfurase complex NFS1-ISD11, which serves as the sulfur donor for cluster synthesis, the iron-binding protein frataxin as the putative iron donor, and the electron transfer chain comprised of ferredoxin reductase and ferredoxin, which receive their electrons from NADH. This is Iron-sulfur cluster assembly protein 1 from Oryza sativa subsp. japonica (Rice).